A 244-amino-acid chain; its full sequence is Small ribosomal subunit protein uS3 (244 aa).

Residues 38–106 (IRKYLNARLA…EVQINIFEVK (69 aa)) form the KH type-2 domain. Positions 222–235 (TGRRNDNAGGNRDK) are enriched in basic and acidic residues. The disordered stretch occupies residues 222-244 (TGRRNDNAGGNRDKNFKRKRANR).

It belongs to the universal ribosomal protein uS3 family. Part of the 30S ribosomal subunit. Forms a tight complex with proteins S10 and S14.

Its function is as follows. Binds the lower part of the 30S subunit head. Binds mRNA in the 70S ribosome, positioning it for translation. This is Small ribosomal subunit protein uS3 from Parabacteroides distasonis (strain ATCC 8503 / DSM 20701 / CIP 104284 / JCM 5825 / NCTC 11152).